The chain runs to 438 residues: Elongation factor 1-alpha (438 aa).

One can recognise a tr-type G domain in the interval 6–229 (KPHLNIVIIG…ALDTLEVPPK (224 aa)). The tract at residues 15–22 (GHVDHGKS) is G1. A GTP-binding site is contributed by 15–22 (GHVDHGKS). Serine 22 contacts Mg(2+). A G2 region spans residues 71–75 (GVTIS). The tract at residues 92–95 (DAPG) is G3. GTP is bound by residues 92–96 (DAPGH) and 154–157 (NKMD). Residues 154–157 (NKMD) are G4. The interval 195–197 (SAW) is G5.

Belongs to the TRAFAC class translation factor GTPase superfamily. Classic translation factor GTPase family. EF-Tu/EF-1A subfamily.

The protein resides in the cytoplasm. The enzyme catalyses GTP + H2O = GDP + phosphate + H(+). Its function is as follows. GTP hydrolase that promotes the GTP-dependent binding of aminoacyl-tRNA to the A-site of ribosomes during protein biosynthesis. The sequence is that of Elongation factor 1-alpha from Desulfurococcus mucosus (Desulfurococcus mobilis).